We begin with the raw amino-acid sequence, 164 residues long: uncharacterized protein (164 aa).

The transit peptide at 1–60 (MERSASVGVNDGRFGGNQFYSPSFSSSSSSSSMRHVNYSCGSCGYELNLSSTNRITSTIG) directs the protein to the chloroplast.

It localises to the plastid. It is found in the chloroplast. This is an uncharacterized protein from Arabidopsis thaliana (Mouse-ear cress).